A 261-amino-acid polypeptide reads, in one-letter code: Cytochrome c oxidase subunit 3 (261 aa).

At 1-15 (MAHQAHAYHMVDPSP) the chain is on the mitochondrial matrix side. The helical transmembrane segment at 16 to 34 (WPLTGAIAALLLTSGTAVW) threads the bilayer. Residues 35–40 (FHFHSL) are Mitochondrial intermembrane-facing. The helical transmembrane segment at 41–66 (TLLTLGNILLLLTMYQWWRDIIREGT) threads the bilayer. At 67 to 72 (FQGHHT) the chain is on the mitochondrial matrix side. A helical membrane pass occupies residues 73–105 (PPVQKGLRYGMILFITSEVFFFLGFFWAFYHAS). Topologically, residues 106-128 (LAPTPELGGCWPPTGITTLDPFE) are mitochondrial intermembrane. Residues 129–152 (VPLLNTAVLLASGVTVTWAHHSIM) form a helical membrane-spanning segment. Topologically, residues 153–155 (EGE) are mitochondrial matrix. Residues 156 to 183 (RKQTIQALTLTILLGFYFTFLQGMEYYE) form a helical membrane-spanning segment. The Mitochondrial intermembrane portion of the chain corresponds to 184–190 (APFTIAD). Residues 191 to 223 (GVYGSTFFVATGFHGLHVIIGSTFLAVCLLRQV) traverse the membrane as a helical segment. Over 224–232 (QYHFTSEHH) the chain is Mitochondrial matrix. The chain crosses the membrane as a helical span at residues 233–256 (FGFEAAAWYWHFVDVVWLFLYVSI). The Mitochondrial intermembrane portion of the chain corresponds to 257 to 261 (YWWGS).

This sequence belongs to the cytochrome c oxidase subunit 3 family. In terms of assembly, component of the cytochrome c oxidase (complex IV, CIV), a multisubunit enzyme composed of 14 subunits. The complex is composed of a catalytic core of 3 subunits MT-CO1, MT-CO2 and MT-CO3, encoded in the mitochondrial DNA, and 11 supernumerary subunits COX4I, COX5A, COX5B, COX6A, COX6B, COX6C, COX7A, COX7B, COX7C, COX8 and NDUFA4, which are encoded in the nuclear genome. The complex exists as a monomer or a dimer and forms supercomplexes (SCs) in the inner mitochondrial membrane with NADH-ubiquinone oxidoreductase (complex I, CI) and ubiquinol-cytochrome c oxidoreductase (cytochrome b-c1 complex, complex III, CIII), resulting in different assemblies (supercomplex SCI(1)III(2)IV(1) and megacomplex MCI(2)III(2)IV(2)).

Its subcellular location is the mitochondrion inner membrane. The enzyme catalyses 4 Fe(II)-[cytochrome c] + O2 + 8 H(+)(in) = 4 Fe(III)-[cytochrome c] + 2 H2O + 4 H(+)(out). Component of the cytochrome c oxidase, the last enzyme in the mitochondrial electron transport chain which drives oxidative phosphorylation. The respiratory chain contains 3 multisubunit complexes succinate dehydrogenase (complex II, CII), ubiquinol-cytochrome c oxidoreductase (cytochrome b-c1 complex, complex III, CIII) and cytochrome c oxidase (complex IV, CIV), that cooperate to transfer electrons derived from NADH and succinate to molecular oxygen, creating an electrochemical gradient over the inner membrane that drives transmembrane transport and the ATP synthase. Cytochrome c oxidase is the component of the respiratory chain that catalyzes the reduction of oxygen to water. Electrons originating from reduced cytochrome c in the intermembrane space (IMS) are transferred via the dinuclear copper A center (CU(A)) of subunit 2 and heme A of subunit 1 to the active site in subunit 1, a binuclear center (BNC) formed by heme A3 and copper B (CU(B)). The BNC reduces molecular oxygen to 2 water molecules using 4 electrons from cytochrome c in the IMS and 4 protons from the mitochondrial matrix. This Oncorhynchus clarkii (Cutthroat trout) protein is Cytochrome c oxidase subunit 3 (mt-co3).